The following is an 81-amino-acid chain: uncharacterized protein (81 aa).

This is an uncharacterized protein from Saccharomyces cerevisiae (strain ATCC 204508 / S288c) (Baker's yeast).